A 205-amino-acid chain; its full sequence is Holliday junction branch migration complex subunit RuvA (205 aa).

A domain I region spans residues 1–64; it reads MIGKLKGTID…EDQLRLFGFL (64 aa). The segment at 65–143 is domain II; it reads SALEREWFRL…AFAGEMSASI (79 aa). A flexible linker region spans residues 144–153; sequence GLKQELGEGV. The tract at residues 153 to 205 is domain III; that stretch reads VAAAPVSDAVSALTNLGYSRDQAANAVAAALKNGGEGGDSAKLIRLGLKELAR.

This sequence belongs to the RuvA family. In terms of assembly, homotetramer. Forms an RuvA(8)-RuvB(12)-Holliday junction (HJ) complex. HJ DNA is sandwiched between 2 RuvA tetramers; dsDNA enters through RuvA and exits via RuvB. An RuvB hexamer assembles on each DNA strand where it exits the tetramer. Each RuvB hexamer is contacted by two RuvA subunits (via domain III) on 2 adjacent RuvB subunits; this complex drives branch migration. In the full resolvosome a probable DNA-RuvA(4)-RuvB(12)-RuvC(2) complex forms which resolves the HJ.

It is found in the cytoplasm. In terms of biological role, the RuvA-RuvB-RuvC complex processes Holliday junction (HJ) DNA during genetic recombination and DNA repair, while the RuvA-RuvB complex plays an important role in the rescue of blocked DNA replication forks via replication fork reversal (RFR). RuvA specifically binds to HJ cruciform DNA, conferring on it an open structure. The RuvB hexamer acts as an ATP-dependent pump, pulling dsDNA into and through the RuvAB complex. HJ branch migration allows RuvC to scan DNA until it finds its consensus sequence, where it cleaves and resolves the cruciform DNA. The chain is Holliday junction branch migration complex subunit RuvA from Sinorhizobium fredii (strain NBRC 101917 / NGR234).